The primary structure comprises 418 residues: Actin-like protein 7B (418 aa).

Residues 1–42 (MATKNSPSPKPMGTAQGDPGEAGTLPAPEAAGIRDTGSTQLK) form a disordered region. Ser8 carries the phosphoserine modification.

It belongs to the actin family. Testis specific.

The protein localises to the cytoplasm. The protein resides in the cytoskeleton. This is Actin-like protein 7B (Actl7b) from Mus musculus (Mouse).